Here is an 81-residue protein sequence, read N- to C-terminus: Kappa-theraphotoxin-Gr2c (81 aa).

An N-terminal signal peptide occupies residues 1 to 19; that stretch reads MKAFFVILGLALLCAYSFA. The propeptide occupies 20 to 50; the sequence is LEEQDQLSLRNDLLTVMFAENSELTPETEER. 3 disulfides stabilise this stretch: cysteine 52/cysteine 66, cysteine 59/cysteine 71, and cysteine 65/cysteine 75.

Belongs to the neurotoxin 30 (phrixotoxin) family. Expressed by the venom gland.

The protein localises to the secreted. Functionally, inhibits sodium channels Nav1.1/SCN1A (IC(50)=5.7 uM), Nav1.2/SCN2A (IC(50)=12 uM), Nav1.4/SCN4A (IC(50)=4 uM), Nav1.6/SCN8A (IC(50)=6.6 uM), Nav1.7/SCN9A (IC(50)=13.6-1030 nM), potassium channels Kv11.1/KCNH2 (IC(50)=4.7 uM), as well as high-voltage-gated calcium channels Cav1.2/CACNA1C (IC(50)= nM). Also blocks mechanosensitive ion channels (also named stretch-activated channels or SACs) and the hypotonic cell swelling induced calcium increase associated with the activation of such channels. It can thus be useful in treating cardiac ventricular disturbances. Also induces analgesia in mammals. The polypeptide is Kappa-theraphotoxin-Gr2c (Grammostola rosea (Chilean rose tarantula)).